A 193-amino-acid polypeptide reads, in one-letter code: Peptidyl-tRNA hydrolase (193 aa).

His-17 is a tRNA binding site. Residue His-22 is the Proton acceptor of the active site. The tRNA site is built by Phe-68, Asn-70, and Asn-116.

It belongs to the PTH family. Monomer.

It is found in the cytoplasm. The catalysed reaction is an N-acyl-L-alpha-aminoacyl-tRNA + H2O = an N-acyl-L-amino acid + a tRNA + H(+). Functionally, hydrolyzes ribosome-free peptidyl-tRNAs (with 1 or more amino acids incorporated), which drop off the ribosome during protein synthesis, or as a result of ribosome stalling. Its function is as follows. Catalyzes the release of premature peptidyl moieties from peptidyl-tRNA molecules trapped in stalled 50S ribosomal subunits, and thus maintains levels of free tRNAs and 50S ribosomes. The protein is Peptidyl-tRNA hydrolase of Xanthomonas euvesicatoria pv. vesicatoria (strain 85-10) (Xanthomonas campestris pv. vesicatoria).